The sequence spans 449 residues: Phosphoglucosamine mutase (449 aa).

Residue Ser101 is the Phosphoserine intermediate of the active site. Positions 101, 242, 244, and 246 each coordinate Mg(2+). The residue at position 101 (Ser101) is a Phosphoserine.

It belongs to the phosphohexose mutase family. The cofactor is Mg(2+). In terms of processing, activated by phosphorylation.

It catalyses the reaction alpha-D-glucosamine 1-phosphate = D-glucosamine 6-phosphate. Its function is as follows. Catalyzes the conversion of glucosamine-6-phosphate to glucosamine-1-phosphate. The polypeptide is Phosphoglucosamine mutase (Bradyrhizobium sp. (strain BTAi1 / ATCC BAA-1182)).